We begin with the raw amino-acid sequence, 349 residues long: Ion-translocating oxidoreductase complex subunit D (349 aa).

The next 3 membrane-spanning stretches (helical) occupy residues A37–A57, L73–P90, and A124–A144. Residue T185 is modified to FMN phosphoryl threonine. The next 5 membrane-spanning stretches (helical) occupy residues A212–L232, W239–L259, G265–T285, A291–I311, and G315–I335.

This sequence belongs to the NqrB/RnfD family. As to quaternary structure, the complex is composed of six subunits: RnfA, RnfB, RnfC, RnfD, RnfE and RnfG. FMN serves as cofactor.

It is found in the cell inner membrane. In terms of biological role, part of a membrane-bound complex that couples electron transfer with translocation of ions across the membrane. In Shewanella sp. (strain W3-18-1), this protein is Ion-translocating oxidoreductase complex subunit D.